A 598-amino-acid chain; its full sequence is MRQLVILSTMPPIQGGVLLNSQNFSKAKQFLGQEYPFALYDMRSENGICFNLEAFAIIVGTIQENGTLYLICPNWHSVEQQIDVDAIRWNGGVAIACPHFFQHFKRLINKFGFEVTSRPQQPFIKTAPSYPAKLIQFTDEQQNILQKLPLDPAEIHIITAARGRGKSTLAGKLAEQFAKTEQVILTAHRSSSIQKILQTASINIPFFAPDKLLNLIETKQISADHLLFIDEAACIPLPILQQLGNYFKKVILTTTTQNYEGTGRGFKLKLVKQLHRTTKEWQLFQPLRWSNHDRLEQFTNELLLLNDELIPLDQNSQFYHLLANAHYKTTATDLRRLFDADQQLFHQCYDKNQRLMAGIWAVKEGELSQDLAEAIWAGKRRPAGNLVAQYLCCQGNLIEACQLKSIRISRIAVQPDLQNQGIGSQLVTDFMQKMQKNNKNRPLDFISVSFGITPHLLTFWRRNGFQLVQITPTKEASSGYHSAMMLYPLSQQGKQFVTKAVKQFERDLALQPFYPTLKNCLAIPAQVENEMNQDDWQNLHGFAFAQRSLANCYTSLKRLYITHQAQLTILAPLFTHRYPANQKVWLQQCRIAIRPFIQ.

ATP is bound by residues Gln141, 163-172 (GRGKSTLAGK), and Arg288. Residues 332–490 (TDLRRLFDAD…HSAMMLYPLS (159 aa)) form the N-acetyltransferase domain. Residues 411-413 (IAV), 418-424 (QNQGIGS), and Arg462 each bind acetyl-CoA.

This sequence belongs to the RNA cytidine acetyltransferase family. TmcA subfamily.

It is found in the cytoplasm. It carries out the reaction cytidine(34) in elongator tRNA(Met) + acetyl-CoA + ATP + H2O = N(4)-acetylcytidine(34) in elongator tRNA(Met) + ADP + phosphate + CoA + H(+). In terms of biological role, catalyzes the formation of N(4)-acetylcytidine (ac(4)C) at the wobble position of tRNA(Met), by using acetyl-CoA as an acetyl donor and ATP (or GTP). In Haemophilus ducreyi (strain 35000HP / ATCC 700724), this protein is tRNA(Met) cytidine acetyltransferase TmcA.